The sequence spans 181 residues: MASSMFSSTAVVTSPAQATMVAPFTGLKSSASFPVTRKANNDITSITSNGGRVSCMKVWPPIGKKKFETLSYLPDLSDVELAKEVDYLLRNKWIPCVEFELEHGFVYREHGNTPGYYDGRYWTMWKLPLFGCTDSAQVLKEVEECKKEYPGAFIRIIGFDNTRQVQCISFIAYKPPSFTEA.

Residues 1-54 (MASSMFSSTAVVTSPAQATMVAPFTGLKSSASFPVTRKANNDITSITSNGGRVS) constitute a chloroplast transit peptide.

The protein belongs to the RuBisCO small chain family. As to quaternary structure, heterohexadecamer of 8 large and 8 small subunits.

The protein resides in the plastid. The protein localises to the chloroplast. In terms of biological role, ruBisCO catalyzes two reactions: the carboxylation of D-ribulose 1,5-bisphosphate, the primary event in carbon dioxide fixation, as well as the oxidative fragmentation of the pentose substrate. Both reactions occur simultaneously and in competition at the same active site. Although the small subunit is not catalytic it is essential for maximal activity. The chain is Ribulose bisphosphate carboxylase small subunit 2B, chloroplastic (RBCS-2B) from Arabidopsis thaliana (Mouse-ear cress).